We begin with the raw amino-acid sequence, 193 residues long: CDP-diacylglycerol--glycerol-3-phosphate 3-phosphatidyltransferase (193 aa).

4 helical membrane-spanning segments follow: residues 8–28 (ITLARIALIPIFMIIMLAPFD), 39–59 (IPVAHLAGAILFIIASTTDWV), 88–108 (AALIILVQFDLAPAWMVIVII), and 157–177 (LVSFPFADLALWVAVFFTVVS).

It belongs to the CDP-alcohol phosphatidyltransferase class-I family.

It is found in the cell membrane. The enzyme catalyses a CDP-1,2-diacyl-sn-glycerol + sn-glycerol 3-phosphate = a 1,2-diacyl-sn-glycero-3-phospho-(1'-sn-glycero-3'-phosphate) + CMP + H(+). Its pathway is phospholipid metabolism; phosphatidylglycerol biosynthesis; phosphatidylglycerol from CDP-diacylglycerol: step 1/2. Its function is as follows. This protein catalyzes the committed step to the synthesis of the acidic phospholipids. This is CDP-diacylglycerol--glycerol-3-phosphate 3-phosphatidyltransferase (pgsA) from Bacillus subtilis (strain 168).